The primary structure comprises 230 residues: Terminal protein (230 aa).

A Nuclear localization signal motif is present at residues arginine 222–lysine 230.

Its subcellular location is the host nucleus. The protein localises to the virion. Its function is as follows. DNA terminal protein is linked to the 5'-ends of both strands of the genome through a phosphodiester bond between the beta-hydroxyl group of a threonine residue and the 5'-phosphate of the terminal deoxyadenylate. This protein is essential for DNA replication and is involved in the priming of DNA elongation. The chain is Terminal protein (4) from Streptococcus pneumoniae (Bacteriophage Cp-1).